Consider the following 209-residue polypeptide: Response regulator protein VraR (209 aa).

The region spanning 4-120 (KVLFVDDHEM…DIADAVRKTS (117 aa)) is the Response regulatory domain. Position 55 is a 4-aspartylphosphate (Asp55). One can recognise an HTH luxR-type domain in the interval 141–206 (RAELYEMLTE…QAVIYAFQHN (66 aa)). Positions 165-184 (NQEIASASHITIKTVKTHVS) form a DNA-binding region, H-T-H motif.

In terms of assembly, homodimer. Phosphorylated by VraS. Phosphorylation state of VraR controls dimerization of the protein.

Member of the two-component regulatory system VraS/VraR involved in the control of the cell wall peptidoglycan biosynthesis. Upon cellular stress, the histidine kinase VraS transfers the phosphoryl group onto VraR. Upon phosphorylation, VraR dimerizes at the N-terminal domain. In turn, phosphorylation-induced dimerization expand and enhance the VraR binding to its own promoter leading to increased expression and subsequent modulation of as many as 40 genes, which ultimately constitute the S.aureus response to cell wall damage. In addition, inhibits the host autophagic flux and delays the early stage of autophagosome formation, thereby promoting bacterial survival. Facilitates the ability of S.aureus to resist host polymorphonuclear leukocytes-mediated phagocytosis and killing thus contributing to immune evasion. This is Response regulator protein VraR (vraR) from Staphylococcus aureus (strain NCTC 8325 / PS 47).